Consider the following 377-residue polypeptide: Probable dehydratase NIT22 (377 aa).

NADP(+) is bound by residues K101 and R196. The interval 220–243 is disordered; the sequence is ERGPKMNEHVPSTPPRRPDAVSSF. A MaoC-like domain is found at 233-332; the sequence is PPRRPDAVSS…ILMWDMGLCK (100 aa). The NADP(+) site is built by T265 and I287.

It belongs to the short-chain dehydrogenases/reductases (SDR) family.

It functions in the pathway siderophore biosynthesis. Its function is as follows. Probable dehydratase; part of the gene cluster that mediates the biosynthesis of hydroxamate-containing siderophores that play a critical role in virulence via intracellular iron acquisition during macrophage infection. The protein is Probable dehydratase NIT22 of Ajellomyces capsulatus (Darling's disease fungus).